The chain runs to 188 residues: Ribosome maturation factor RimM (188 aa).

One can recognise a PRC barrel domain in the interval 96 to 169; it reads DDEFYYADLE…RILIDPMAAG (74 aa).

This sequence belongs to the RimM family. In terms of assembly, binds ribosomal protein uS19.

It localises to the cytoplasm. An accessory protein needed during the final step in the assembly of 30S ribosomal subunit, possibly for assembly of the head region. Essential for efficient processing of 16S rRNA. May be needed both before and after RbfA during the maturation of 16S rRNA. It has affinity for free ribosomal 30S subunits but not for 70S ribosomes. In Agrobacterium fabrum (strain C58 / ATCC 33970) (Agrobacterium tumefaciens (strain C58)), this protein is Ribosome maturation factor RimM.